We begin with the raw amino-acid sequence, 369 residues long: tRNA 2-selenouridine synthase (369 aa).

Residues 12-136 (FLEDTPLMDV…LRNFLFETTR (125 aa)) form the Rhodanese domain. Residue cysteine 95 is the S-selanylcysteine intermediate of the active site.

It belongs to the SelU family. In terms of assembly, monomer.

The catalysed reaction is 5-methylaminomethyl-2-thiouridine(34) in tRNA + selenophosphate + (2E)-geranyl diphosphate + H2O + H(+) = 5-methylaminomethyl-2-selenouridine(34) in tRNA + (2E)-thiogeraniol + phosphate + diphosphate. It carries out the reaction 5-methylaminomethyl-2-thiouridine(34) in tRNA + (2E)-geranyl diphosphate = 5-methylaminomethyl-S-(2E)-geranyl-thiouridine(34) in tRNA + diphosphate. The enzyme catalyses 5-methylaminomethyl-S-(2E)-geranyl-thiouridine(34) in tRNA + selenophosphate + H(+) = 5-methylaminomethyl-2-(Se-phospho)selenouridine(34) in tRNA + (2E)-thiogeraniol. It catalyses the reaction 5-methylaminomethyl-2-(Se-phospho)selenouridine(34) in tRNA + H2O = 5-methylaminomethyl-2-selenouridine(34) in tRNA + phosphate. Functionally, involved in the post-transcriptional modification of the uridine at the wobble position (U34) of tRNA(Lys), tRNA(Glu) and tRNA(Gln). Catalyzes the conversion of 2-thiouridine (S2U-RNA) to 2-selenouridine (Se2U-RNA). Acts in a two-step process involving geranylation of 2-thiouridine (S2U) to S-geranyl-2-thiouridine (geS2U) and subsequent selenation of the latter derivative to 2-selenouridine (Se2U) in the tRNA chain. The polypeptide is tRNA 2-selenouridine synthase (Pseudomonas paraeruginosa (strain DSM 24068 / PA7) (Pseudomonas aeruginosa (strain PA7))).